Here is a 130-residue protein sequence, read N- to C-terminus: RNA silencing suppressor p14 (130 aa).

Its function is as follows. Acts as a suppressor of RNA-mediated gene silencing, also known as post-transcriptional gene silencing (PTGS), a mechanism of plant viral defense that limits the accumulation of viral RNAs. Binds to dsRNAs without size specificity. The chain is RNA silencing suppressor p14 from Pothos latent virus (isolate Pigeonpea/India) (PoLV).